The chain runs to 130 residues: MKILVAVAVFFLVSTQLFAEEIDANDDLNYWSDWSDSDQIKEAMPEPFEHLLQRIARRPKPQQFFGLMGKRDADSSVEKQVALLKALYGHGQISHKRHKTDSFVGLMGKRALNSVAYERSAMQNYERRRK.

The N-terminal stretch at 1-19 is a signal peptide; the sequence is MKILVAVAVFFLVSTQLFA. Residues 20–56 constitute a propeptide that is removed on maturation; it reads EEIDANDDLNYWSDWSDSDQIKEAMPEPFEHLLQRIA. A methionine amide mark is found at M68 and M107.

The protein belongs to the tachykinin family. In terms of processing, the substance P form is cleaved at Pro-59 by the prolyl endopeptidase FAP (seprase) activity (in vitro). Substance P is also cleaved and degraded by Angiotensin-converting enzyme (ACE) and neprilysin (MME).

The protein localises to the secreted. Its function is as follows. Tachykinins are active peptides which excite neurons, evoke behavioral responses, are potent vasodilators and secretagogues, and contract (directly or indirectly) many smooth muscles. The chain is Protachykinin-1 (Tac1) from Mus musculus (Mouse).